The sequence spans 324 residues: Fe-S cluster assembly protein dre2 (324 aa).

Residues 28-158 are N-terminal SAM-like domain; sequence GSPSKRTLLL…KMDQPKSFAI (131 aa). Positions 159-217 are linker; that stretch reads PLRRNGKKKDAAKTETFAPAPAPAPPVQPVTVGMINNDDDYENDDDLIDEDTLLSDEDL. [2Fe-2S] cluster contacts are provided by Cys-226, Cys-237, Cys-240, and Cys-242. Residues 226–242 are fe-S binding site A; sequence CQPKPGRRRRACKDCTC. The [4Fe-4S] cluster site is built by Cys-287, Cys-290, Cys-298, and Cys-301. 2 consecutive short sequence motifs (cx2C motif) follow at residues 287–290 and 298–301; these read CGNC and CAGC. Positions 287-301 are fe-S binding site B; sequence CGNCALGDAFRCAGC.

The protein belongs to the anamorsin family. In terms of assembly, monomer. Interacts with tah18. Interacts with mia40. Requires [2Fe-2S] cluster as cofactor. [4Fe-4S] cluster is required as a cofactor.

Its subcellular location is the cytoplasm. The protein localises to the mitochondrion intermembrane space. Functionally, component of the cytosolic iron-sulfur (Fe-S) protein assembly (CIA) machinery required for the maturation of extramitochondrial Fe-S proteins. Part of an electron transfer chain functioning in an early step of cytosolic Fe-S biogenesis, facilitating the de novo assembly of a [4Fe-4S] cluster on the scaffold complex cfd1-nbp35. Electrons are transferred to dre2 from NADPH via the FAD- and FMN-containing protein tah18. Tah18-dre2 are also required for the assembly of the diferric tyrosyl radical cofactor of ribonucleotide reductase (RNR), probably by providing electrons for reduction during radical cofactor maturation in the catalytic small subunit rnr2. In Aspergillus niger (strain ATCC MYA-4892 / CBS 513.88 / FGSC A1513), this protein is Fe-S cluster assembly protein dre2.